The sequence spans 870 residues: Valine--tRNA ligase (870 aa).

A 'HIGH' region motif is present at residues 42 to 52 (PNVTGVLHIGH). The short motif at 527-531 (KMSKS) is the 'KMSKS' region element. K530 contacts ATP. Residues 800-870 (LENVDLSGIL…ISVELQNLRG (71 aa)) are a coiled coil.

The protein belongs to the class-I aminoacyl-tRNA synthetase family. ValS type 1 subfamily. In terms of assembly, monomer.

It localises to the cytoplasm. The catalysed reaction is tRNA(Val) + L-valine + ATP = L-valyl-tRNA(Val) + AMP + diphosphate. Its function is as follows. Catalyzes the attachment of valine to tRNA(Val). As ValRS can inadvertently accommodate and process structurally similar amino acids such as threonine, to avoid such errors, it has a 'posttransfer' editing activity that hydrolyzes mischarged Thr-tRNA(Val) in a tRNA-dependent manner. This Campylobacter jejuni subsp. jejuni serotype O:2 (strain ATCC 700819 / NCTC 11168) protein is Valine--tRNA ligase.